We begin with the raw amino-acid sequence, 299 residues long: Biphenyl-2,3-diol 1,2-dioxygenase (299 aa).

VOC domains are found at residues 6–121 (ELGY…IFYG) and 146–267 (GIGH…FGWG). Residues histidine 149, histidine 212, and glutamate 263 each contribute to the Fe cation site.

It belongs to the extradiol ring-cleavage dioxygenase family. Homooctamer. It depends on Fe(2+) as a cofactor.

The enzyme catalyses biphenyl-2,3-diol + O2 = 2-hydroxy-6-oxo-6-phenylhexa-2,4-dienoate + H(+). Its pathway is xenobiotic degradation; biphenyl degradation; 2-hydroxy-2,4-pentadienoate and benzoate from biphenyl: step 3/4. This chain is Biphenyl-2,3-diol 1,2-dioxygenase (bphC), found in Sphingomonas paucimobilis (Pseudomonas paucimobilis).